Reading from the N-terminus, the 293-residue chain is Non-structural protein NS-S (293 aa).

The segment at 21 to 29 is essential for inhibition of IFN-beta activation and interaction with host TBK1; the sequence is VRLEPSLGE. An involved in inclusion bodies formation region spans residues 66–69; the sequence is PKNP. The interval 148-220 is interaction with host TNIP2; the sequence is FEGDMILDSL…KPLLDCWDFF (73 aa).

This sequence belongs to the Bandavirus NS-S protein family. Interacts with the host E3 ubiquitin ligase TRIM25; this interaction sequesters TRIM25 in NSs-induced cytoplasmic inclusion bodies. Interacts with the host E3 ubiquitin ligase RIGI; this interaction sequesters RIGI in NSs-induced cytoplasmic inclusion bodies. Interacts with the host E3 ubiquitin ligase TBK1 (via N-terminus); this interaction sequesters TBK1 in NSs-induced cytoplasmic inclusion bodies and inhibits TBK1 phosphorylation. NSs does not interact with IKBKE/IKKE or IRF3. Interacts with host IRF7; this interaction sequesters IRF7 in NSs-induced cytoplasmic inclusion bodies. Interacts with host SYNGR2; this interaction is essential to promoting the formation of the inclusion bodies to become virus factories for viral RNA replication through its interaction with NSs. Interacts with host STAT2; this interaction sequesters STAT2 in NSs-induced cytoplasmic inclusion bodies. Interacts with host TNIP2; this interaction promotes TPL2 complex formation and signaling activity leading to IL-10 production. Interacts with host TRIM21 (via B30.2/SPRY domain); this interaction activates host NFE2L2-mediated transcriptional activation of antioxidant genes. Interacts with host CDK1; this interaction is inclusion body dependent, it inhibits the formation and nuclear import of the cyclin B1-CDK1 complex and leads to host cell cycle arrest.

The protein localises to the host cytoplasm. It localises to the host cytoplasmic vesicle. In terms of biological role, sequesters host STAT2 into viral inclusion bodies. Impairs IFN-stimulated phosphorylation and nuclear translocation of host STAT2, thereby suppressing type-I IFN antiviral signaling. Sequesters host TRIM25, RIGI, TBK1/IKK complex components (TBK1, IKBKE/IKKE, and IRF3) and IRF7 into viral inclusion bodies, thereby inhibiting the IFN responses. Inhibits TRIM25-mediated ubiquitination of the RIGI. The sequestration of IKBKE/IKKE, and IRF3 occurs via the interaction with TBK1. Sequestration and inhibition of host TBK1 probably participates to the cytokine storm induced by the virus. Also inhibits the phosphorylation of host TBK1. Interacts with host TNIP2 and promotes TPL2-TNIP2-p105 complex formation leading to IL-10 induction. By interacting with CDK1, induces host cell arrest at the G2/M transition to promote viral replication. Requested for the formation of the viral cytoplasmic inclusion bodies. This chain is Non-structural protein NS-S (NSS), found in SFTS phlebovirus (isolate SFTSV/Human/China/HB29/2010) (Severe fever with thrombocytopenia virus).